The primary structure comprises 39 residues: Potassium channel toxin alpha-KTx 2.8 (39 aa).

3 cysteine pairs are disulfide-bonded: Cys7–Cys29, Cys13–Cys34, and Cys17–Cys36.

The protein belongs to the short scorpion toxin superfamily. Potassium channel inhibitor family. Alpha-KTx 02 subfamily. As to expression, expressed by the venom gland.

It localises to the secreted. In terms of biological role, blocks Kv1.3/KCNA3 voltage-gated potassium channels of human T-lymphocytes (Kd=0.71 nM). The protein is Potassium channel toxin alpha-KTx 2.8 of Centruroides elegans (Bark scorpion).